A 316-amino-acid chain; its full sequence is Biotin synthase (316 aa).

A Radical SAM core domain is found at 36–260 (NKIQISMLLN…LMPKSYIRLA (225 aa)). [4Fe-4S] cluster-binding residues include cysteine 51, cysteine 55, and cysteine 58. [2Fe-2S] cluster is bound by residues cysteine 95, cysteine 126, cysteine 186, and arginine 258.

This sequence belongs to the radical SAM superfamily. Biotin synthase family. Homodimer. It depends on [4Fe-4S] cluster as a cofactor. Requires [2Fe-2S] cluster as cofactor.

It catalyses the reaction (4R,5S)-dethiobiotin + (sulfur carrier)-SH + 2 reduced [2Fe-2S]-[ferredoxin] + 2 S-adenosyl-L-methionine = (sulfur carrier)-H + biotin + 2 5'-deoxyadenosine + 2 L-methionine + 2 oxidized [2Fe-2S]-[ferredoxin]. The protein operates within cofactor biosynthesis; biotin biosynthesis; biotin from 7,8-diaminononanoate: step 2/2. Catalyzes the conversion of dethiobiotin (DTB) to biotin by the insertion of a sulfur atom into dethiobiotin via a radical-based mechanism. This chain is Biotin synthase, found in Lawsonia intracellularis (strain PHE/MN1-00).